The chain runs to 454 residues: tRNA modification GTPase MnmE (454 aa).

(6S)-5-formyl-5,6,7,8-tetrahydrofolate-binding residues include Arg23, Glu80, and Lys120. Residues 216–377 enclose the TrmE-type G domain; that stretch reads GMKVVIAGRP…LRNHLKQSMG (162 aa). Asn226 serves as a coordination point for K(+). GTP-binding positions include 226 to 231, 245 to 251, 270 to 273, 335 to 338, and 358 to 360; these read NAGKSS, TDIAGTT, DTAG, NKAD, and SAR. Residue Ser230 coordinates Mg(2+). Positions 245, 247, and 250 each coordinate K(+). Thr251 is a binding site for Mg(2+). Lys454 serves as a coordination point for (6S)-5-formyl-5,6,7,8-tetrahydrofolate.

It belongs to the TRAFAC class TrmE-Era-EngA-EngB-Septin-like GTPase superfamily. TrmE GTPase family. Homodimer. Heterotetramer of two MnmE and two MnmG subunits. K(+) is required as a cofactor.

The protein resides in the cytoplasm. Exhibits a very high intrinsic GTPase hydrolysis rate. Involved in the addition of a carboxymethylaminomethyl (cmnm) group at the wobble position (U34) of certain tRNAs, forming tRNA-cmnm(5)s(2)U34. The polypeptide is tRNA modification GTPase MnmE (Salmonella choleraesuis (strain SC-B67)).